Reading from the N-terminus, the 412-residue chain is MAGNNSGGGSYPLDDHVKSVARDLQHRFAQMSNRDQKFDLHVIPDLLSQPVVPEPPAQDDKEAQNFEKYLIAMSHIPLNYENPGLLDEALQQIPLDRLSQEAEEEVELFQAKAASLGRSKPEWSHQECMVRALLRWFRRSFFTFVNNPPCSECLSPTNKIRNVAPTPEERAHSATWVELYACVTCGAYERFPRYTEAWQLLRVKRGRAGDFANVFTMLCRALDIRARWVWCQEDYLWTEIYSEHQQRWVHVDSCEEAWDMPHMYYKNWGKKMSYVIAFSREGAVDVTRRYVGSPDALLPRTRCPEGVLKFIMEEITNLHRPKYAPDGETRLRLYREDVAEDVQLRSLWSATLEQSRRLKAAAAAAARGGRSSPDNKSGANMMGSPATGDIKRPIPEDAPVPDVPSLWPTYGP.

4 residues coordinate Zn(2+): Cys-150, Cys-153, Cys-182, and Cys-185. The tract at residues Ala-363–Pro-412 is disordered.

It belongs to the transglutaminase-like superfamily. PNGase family.

The protein is Protein png-1 (un-7) of Neurospora crassa (strain ATCC 24698 / 74-OR23-1A / CBS 708.71 / DSM 1257 / FGSC 987).